Here is a 1018-residue protein sequence, read N- to C-terminus: Fibronectin-binding protein A (1018 aa).

The signal sequence occupies residues 1–36 (MKNNLRYGIRKHKLGAASVFLGTMIVVGMGQDKEAA). Positions 7-18 (YGIRKHKLGAAS) match the YSIRK-G/S signaling motif motif. The tract at residues 37–511 (ASEQKTTTVE…SNKANGNGKN (475 aa)) is ligand-binding A region. 2 disordered regions span residues 38–61 (SEQK…SETQ) and 78–195 (ATVT…ETGT). 2 stretches are compositionally biased toward polar residues: residues 39–61 (EQKT…SETQ) and 78–92 (ATVT…QVTT). The segment covering 112–126 (TVKEEVVKEEAKPQV) has biased composition (basic and acidic residues). Residues 129–139 (TTQSQDNSGDQ) show a composition bias toward polar residues. Residues 194–511 (GTDVTSKVTV…SNKANGNGKN (318 aa)) form a fibrinogen/elastin/tropoelastin-binding region. Residues 512–872 (GPIIQNNKFE…EGQQTIEEDT (361 aa)) are fibronectin-binding. A B-1 repeat occupies 545 to 574 (EEYDSSTLDIDYHTAIDGGGGYVDGYIETI). The 2 X approximate tandem repeats stretch occupies residues 545–604 (EEYDSSTLDIDYHTAIDGGGGYVDGYIETIEETDSSAIDIDYHTAVDSEAGHVGGYTESS). A B-2 repeat occupies 575 to 604 (EETDSSAIDIDYHTAVDSEAGHVGGYTESS). Disordered stretches follow at residues 595-622 (GHVG…NSKH), 740-813 (LGYE…DIDF), and 827-997 (EIIE…GMLF). A D-1 repeat occupies 745 to 782 (GQNSGNQSFEEDTEEDKPKYEQGGNIVDIDFDSVPQIH). Residues 745 to 878 (GQNSGNQSFE…EEDTTPPIVP (134 aa)) form a 4 X approximate tandem repeats region. Residues 783–820 (GQNKGNQSFEEDTEKDKPKYEHGGNIIDIDFDSVPHIH) form a D-2 repeat. A D-3 repeat occupies 821–859 (GFNKHTEIIEEDTNKDKPSYQFGGHNSVDFEEDTLPKVS). Positions 827-838 (EIIEEDTNKDKP) are enriched in basic and acidic residues. A D-4; truncated repeat occupies 860 to 878 (GQNEGQQTIEEDTTPPIVP). A compositionally biased stretch (pro residues) spans 875 to 938 (PIVPPTPPTP…PAEPGKPVPP (64 aa)). 5 WR repeats span residues 879-892 (PTPP…EPET), 893-906 (PTPP…EPET), 907-920 (PTPP…EPET), 921-934 (PTPP…EPGK), and 935-948 (PVPP…KPSK). Positions 879–948 (PTPPTPEVPS…AKEEPKKPSK (70 aa)) are 5 X tandem repeats, Pro-rich (WR). Residues 982–986 (LPETG) carry the LPXTG sorting signal motif. Thr985 is subject to Pentaglycyl murein peptidoglycan amidated threonine. The propeptide at 986-1018 (GGEESTNKGMLFGGLFSILGLALLRRNKKNHKA) is removed by sortase.

The protein localises to the secreted. Its subcellular location is the cell wall. Promotes bacterial attachment to multiple substrates, such as fibronectin (Fn), fibrinogen (Fg), elastin peptides and tropoelastin. This confers to S.aureus the ability to invade endothelial cells. Promotes adherence to and aggregation of activated platelets. The polypeptide is Fibronectin-binding protein A (Staphylococcus aureus (strain USA300)).